Here is a 374-residue protein sequence, read N- to C-terminus: Protein dip1 (374 aa).

Belongs to the LDB17 family.

Its subcellular location is the cytoplasm. The protein resides in the nucleus. It localises to the cell tip. In terms of biological role, may be involved in protein-linked oligosaccharide phosphorylation. This chain is Protein dip1 (dip1), found in Schizosaccharomyces pombe (strain 972 / ATCC 24843) (Fission yeast).